Here is a 207-residue protein sequence, read N- to C-terminus: Large ribosomal subunit protein uL4 (207 aa).

Residues Arg45–Val89 are disordered. A compositionally biased stretch (basic residues) spans Gly60–Gly71.

It belongs to the universal ribosomal protein uL4 family. As to quaternary structure, part of the 50S ribosomal subunit.

Functionally, one of the primary rRNA binding proteins, this protein initially binds near the 5'-end of the 23S rRNA. It is important during the early stages of 50S assembly. It makes multiple contacts with different domains of the 23S rRNA in the assembled 50S subunit and ribosome. Forms part of the polypeptide exit tunnel. The protein is Large ribosomal subunit protein uL4 of Bacillus mycoides (strain KBAB4) (Bacillus weihenstephanensis).